We begin with the raw amino-acid sequence, 94 residues long: Acylphosphatase (94 aa).

The Acylphosphatase-like domain maps to 7–94; it reads AVRVRISGRV…NMPRDFRITG (88 aa). Catalysis depends on residues Arg22 and Asn40.

The protein belongs to the acylphosphatase family.

It carries out the reaction an acyl phosphate + H2O = a carboxylate + phosphate + H(+). This Rhizobium etli (strain ATCC 51251 / DSM 11541 / JCM 21823 / NBRC 15573 / CFN 42) protein is Acylphosphatase (acyP).